The sequence spans 131 residues: Two-component response regulator ORR3 (131 aa).

A Response regulatory domain is found at 12-129 (HVLAVDDSIV…DVSRLCNRVI (118 aa)). The residue at position 62 (D62) is a 4-aspartylphosphate.

Belongs to the ARR family. Type-A subfamily. Post-translationally, two-component system major event consists of a His-to-Asp phosphorelay between a sensor histidine kinase (HK) and a response regulator (RR). In plants, the His-to-Asp phosphorelay involves an additional intermediate named Histidine-containing phosphotransfer protein (HPt). This multistep phosphorelay consists of a His-Asp-His-Asp sequential transfer of a phosphate group between first a His and an Asp of the HK protein, followed by the transfer to a conserved His of the HPt protein and finally the transfer to an Asp in the receiver domain of the RR protein. As to expression, expressed in roots, mature leaves and flowers, and at low levels in shoots.

Functions as a response regulator involved in His-to-Asp phosphorelay signal transduction system. Phosphorylation of the Asp residue in the receiver domain activates the ability of the protein to promote the transcription of target genes. Type-A response regulators seem to act as negative regulators of the cytokinin signaling. The sequence is that of Two-component response regulator ORR3 from Oryza sativa subsp. indica (Rice).